Here is a 108-residue protein sequence, read N- to C-terminus: Nucleoid-associated protein CHAB381_0200 (108 aa).

The protein belongs to the YbaB/EbfC family. Homodimer.

It localises to the cytoplasm. The protein resides in the nucleoid. Binds to DNA and alters its conformation. May be involved in regulation of gene expression, nucleoid organization and DNA protection. The polypeptide is Nucleoid-associated protein CHAB381_0200 (Campylobacter hominis (strain ATCC BAA-381 / DSM 21671 / CCUG 45161 / LMG 19568 / NCTC 13146 / CH001A)).